A 581-amino-acid polypeptide reads, in one-letter code: Kelch-like protein 30 (581 aa).

The BTB domain maps to Ala-33–Gln-100. The region spanning Cys-135–Ala-237 is the BACK domain. 6 Kelch repeats span residues Glu-280–Ser-327, Asp-328–Gly-378, Glu-379–Gly-423, Leu-425–Gly-472, Leu-474–Asp-514, and Leu-515–Leu-564.

The polypeptide is Kelch-like protein 30 (Klhl30) (Mus musculus (Mouse)).